A 336-amino-acid chain; its full sequence is Ventral anterior homeobox 1 (336 aa).

Over residues 1 to 34 the composition is skewed to basic and acidic residues; the sequence is MFGKTDKMDVRCHSDTEAARVSKNAHKESREIKG. Disordered stretches follow at residues 1 to 39 and 50 to 69; these read MFGKTDKMDVRCHSDTEAARVSKNAHKESREIKGAEGSL and AFSASGASEDCNKSKSNSSA. A DNA-binding region (homeobox) is located at residues 100-159; sequence PKRTRTSFTAEQLYRLEMEFQRCQYVVGRERTELARQLNLSETQVKVWFQNRRTKQKKDQ. Residues 236-250 are compositionally biased toward low complexity; sequence PGPAGAASQHPPAVG. Disordered stretches follow at residues 236–267 and 316–336; these read PGPAGAASQHPPAVGGAPGPGPAGPGGLHAGA and SAFEPYSRTNNKEGAEKKALD. Basic and acidic residues predominate over residues 325–336; it reads NNKEGAEKKALD.

Belongs to the EMX homeobox family.

The protein localises to the nucleus. In terms of biological role, transcription factor that may function in dorsoventral specification of the forebrain. Required for axon guidance and major tract formation in the developing forebrain. May contribute to the differentiation of the neuroretina, pigmented epithelium and optic stalk. The polypeptide is Ventral anterior homeobox 1 (Vax1) (Rattus norvegicus (Rat)).